The chain runs to 470 residues: Calmodulin-binding receptor-like cytoplasmic kinase 1 (470 aa).

Disordered regions lie at residues 1–29 (MPMR…SWTD) and 65–128 (PTEC…SKSW). The segment covering 65–82 (PTECRSDPGESSTHDRES) has biased composition (basic and acidic residues). Composition is skewed to polar residues over residues 83–98 (TLSG…SFGR) and 108–121 (YRFS…PGKD). One can recognise a Protein kinase domain in the interval 147–423 (FSSVHQIGEG…MKGIAEKLWA (277 aa)). Residues 153 to 161 (IGEGGFGTV) and lysine 175 contribute to the ATP site. The tract at residues 162–185 (FKGKLDDGTIVAIKRARKNNYGKS) is caM-binding. Catalysis depends on aspartate 273, which acts as the Proton acceptor. Phosphoserine occurs at positions 277 and 308. Threonine 309 bears the Phosphothreonine mark. Phosphotyrosine is present on tyrosine 322.

The protein belongs to the protein kinase superfamily. Ser/Thr protein kinase family. As to quaternary structure, interacts with calmodulin (CaM) in a Ca(2+)-dependent manner. Mg(2+) is required as a cofactor. In terms of processing, autophosphorylated.

The protein localises to the cytoplasm. It carries out the reaction L-seryl-[protein] + ATP = O-phospho-L-seryl-[protein] + ADP + H(+). The catalysed reaction is L-threonyl-[protein] + ATP = O-phospho-L-threonyl-[protein] + ADP + H(+). With respect to regulation, up-regulated by Ca(2+)/CaM. This Arabidopsis thaliana (Mouse-ear cress) protein is Calmodulin-binding receptor-like cytoplasmic kinase 1 (CRCK1).